The following is a 538-amino-acid chain: Putative cysteine ligase BshC (538 aa).

The stretch at Ile-419 to Glu-445 forms a coiled coil.

This sequence belongs to the BshC family.

Involved in bacillithiol (BSH) biosynthesis. May catalyze the last step of the pathway, the addition of cysteine to glucosamine malate (GlcN-Mal) to generate BSH. The protein is Putative cysteine ligase BshC of Lysinibacillus sphaericus (strain C3-41).